A 593-amino-acid polypeptide reads, in one-letter code: Glyoxylate carboligase (593 aa).

The protein belongs to the TPP enzyme family. As to quaternary structure, homotetramer. It depends on Mg(2+) as a cofactor. The cofactor is thiamine diphosphate.

The enzyme catalyses 2 glyoxylate + H(+) = 2-hydroxy-3-oxopropanoate + CO2. The protein operates within organic acid metabolism; glycolate degradation; 3-phospho-D-glycerate from glycolate: step 2/4. Catalyzes the condensation of two molecules of glyoxylate to give 2-hydroxy-3-oxopropanoate (also termed tartronate semialdehyde). The chain is Glyoxylate carboligase (gcl) from Escherichia coli O157:H7.